The primary structure comprises 21 residues: 23S rRNA methylase leader peptide (21 aa).

Involved in erythromycin resistance. This Corynebacterium diphtheriae protein is 23S rRNA methylase leader peptide.